Reading from the N-terminus, the 265-residue chain is Aquaporin-5 (265 aa).

At 1 to 12 (MKKEVCSAAFLK) the chain is on the cytoplasmic side. A helical transmembrane segment spans residues 13–33 (AVFAEFLATLIFVFFGLGSAL). At 34–39 (KWPSAM) the chain is on the extracellular side. A helical transmembrane segment spans residues 40-60 (PSVLQISLAFGLAIGTMAQAL). Residues 61 to 65 (GPVSG) are Cytoplasmic-facing. The segment at residues 66-74 (GHMNPAITL) is an intramembrane region (discontinuously helical). Residues 69 to 71 (NPA) carry the NPA 1 motif. At 75–87 (ALLVGNQISLLRA) the chain is on the cytoplasmic side. Residues 88-108 (VFYLVAQLVGAIAGAAILYGL) traverse the membrane as a helical segment. Over 109–126 (APYNARSNLAVNALNNNT) the chain is Extracellular. N124 and N125 each carry an N-linked (GlcNAc...) asparagine glycan. The helical transmembrane segment at 127–147 (TAGQAVVAEMILTFQLALCVF) threads the bilayer. Residues 148 to 158 (SSTDSRRTSPV) lie on the Cytoplasmic side of the membrane. A helical membrane pass occupies residues 159–179 (GSPALSIGLSVTLGHLVGIYF). A topological domain (extracellular) is located at residue T180. Residues 181 to 191 (GCSMNPARSFG) constitute an intramembrane region (discontinuously helical). The NPA 2 signature appears at 185–187 (NPA). Topologically, residues 192-203 (PAVIMSRFSSAH) are extracellular. The chain crosses the membrane as a helical span at residues 204 to 224 (WVFWVGPIVGAATAAIIYFYL). At 225–265 (LFPHSLSLSDRVAILKGTYEPDEDWEESQEERKKTMELTAH) the chain is on the cytoplasmic side.

Belongs to the MIP/aquaporin (TC 1.A.8) family. As to quaternary structure, homotetramer; each monomer provides an independent water pore. Interacts with TRPV4; the interaction is probably indirect and regulates TRPV4 activation by hypotonicity.

It localises to the apical cell membrane. It is found in the cell membrane. The protein resides in the cytoplasmic vesicle membrane. It carries out the reaction H2O(in) = H2O(out). Its function is as follows. Aquaporins form homotetrameric transmembrane channels, with each monomer independently mediating water transport across the plasma membrane along its osmotic gradient. Plays an important role in fluid secretion in salivary glands. Required for TRPV4 activation by hypotonicity. Together with TRPV4, controls regulatory volume decrease in salivary epithelial cells. Seems to play a redundant role in water transport in the eye, lung and in sweat glands. The chain is Aquaporin-5 from Ovis aries (Sheep).